The sequence spans 176 residues: Putative L,D-transpeptidase YqjB (176 aa).

The signal sequence occupies residues 1–25 (MRFFLCSIFMMISPIWPLGENPLPG). In terms of domain architecture, L,D-TPase catalytic spans 27 to 151 (PYVIVNKRTN…IPVGTRVLIT (125 aa)). The active-site Proton donor/acceptor is the H111. Catalysis depends on C127, which acts as the Nucleophile.

This sequence belongs to the YkuD family.

Its pathway is cell wall biogenesis; peptidoglycan biosynthesis. The polypeptide is Putative L,D-transpeptidase YqjB (yqjB) (Bacillus subtilis (strain 168)).